Consider the following 309-residue polypeptide: Olfactory receptor 14A16 (309 aa).

Topologically, residues 1–23 (MANLTIVTEFILMGFSTNKNMCI) are extracellular. An N-linked (GlcNAc...) asparagine glycan is attached at N3. Residues 24-44 (LHSILFLLIYLCALMGNVLII) traverse the membrane as a helical segment. Over 45–52 (MITTLDHH) the chain is Cytoplasmic. A helical membrane pass occupies residues 53 to 73 (LHTPVYFFLKNLSFLDLCLIS). The Extracellular segment spans residues 74 to 97 (VTAPKSIANSLIHNNSISFLGCVS). N-linked (GlcNAc...) asparagine glycosylation is present at N87. Cysteines 95 and 187 form a disulfide. A helical membrane pass occupies residues 98-118 (QVFLLLSSASAELLLLTVMSF). Over 119–131 (DRYTAICHPLHYD) the chain is Cytoplasmic. A helical transmembrane segment spans residues 132 to 152 (VIMDRSTCVQRATVSWLYGGL). Topologically, residues 153–194 (IAVMHTAGTFSLSYCGSNMVHQFFCDIPQLLAISCSENLIRE) are extracellular. A helical membrane pass occupies residues 195-215 (IALILINVVLDFCCFIVIIIT). The Cytoplasmic portion of the chain corresponds to 216–235 (YVHVFSTVKKIPSTEGQSKA). The helical transmembrane segment at 236–255 (YSICLPHLLVVLFLSTGFIA) threads the bilayer. The Extracellular portion of the chain corresponds to 256–268 (YLKPASESPSILD). The chain crosses the membrane as a helical span at residues 269–289 (AVISVFYTMLPPTFNPIIYSL). Over 290–309 (RNKAIKVALGMLIKGKLTKK) the chain is Cytoplasmic.

Belongs to the G-protein coupled receptor 1 family.

The protein resides in the cell membrane. In terms of biological role, odorant receptor. The protein is Olfactory receptor 14A16 (OR14A16) of Homo sapiens (Human).